The sequence spans 320 residues: Ribose-phosphate pyrophosphokinase (320 aa).

Residue 41–43 coordinates ATP; that stretch reads NDN. Residues His134 and Asp175 each contribute to the Mg(2+) site. Lys198 is a catalytic residue. Positions 200 and 224 each coordinate D-ribose 5-phosphate.

This sequence belongs to the ribose-phosphate pyrophosphokinase family. Class I subfamily. Homohexamer. Requires Mg(2+) as cofactor.

The protein resides in the cytoplasm. The catalysed reaction is D-ribose 5-phosphate + ATP = 5-phospho-alpha-D-ribose 1-diphosphate + AMP + H(+). Its pathway is metabolic intermediate biosynthesis; 5-phospho-alpha-D-ribose 1-diphosphate biosynthesis; 5-phospho-alpha-D-ribose 1-diphosphate from D-ribose 5-phosphate (route I): step 1/1. Its function is as follows. Involved in the biosynthesis of the central metabolite phospho-alpha-D-ribosyl-1-pyrophosphate (PRPP) via the transfer of pyrophosphoryl group from ATP to 1-hydroxyl of ribose-5-phosphate (Rib-5-P). The chain is Ribose-phosphate pyrophosphokinase from Deinococcus radiodurans (strain ATCC 13939 / DSM 20539 / JCM 16871 / CCUG 27074 / LMG 4051 / NBRC 15346 / NCIMB 9279 / VKM B-1422 / R1).